The following is a 103-amino-acid chain: Large ribosomal subunit protein bL21 (103 aa).

The protein belongs to the bacterial ribosomal protein bL21 family. Part of the 50S ribosomal subunit. Contacts protein L20.

Its function is as follows. This protein binds to 23S rRNA in the presence of protein L20. The chain is Large ribosomal subunit protein bL21 from Chloroflexus aurantiacus (strain ATCC 29364 / DSM 637 / Y-400-fl).